We begin with the raw amino-acid sequence, 682 residues long: K(+)-insensitive pyrophosphate-energized proton pump 2 (682 aa).

A run of 5 helical transmembrane segments spans residues 1–21 (MELF…ALYM), 56–76 (TIAG…RQYH), 78–98 (AVAF…GMYV), 130–150 (LAVT…FGGA), and 160–180 (IVGF…SGGI). Lys-183 contacts substrate. 3 residues coordinate Mg(2+): Asp-186, Asp-190, and Asp-216. The next 7 helical transmembrane spans lie at 237–257 (IGAM…GIVF), 258–278 (PLVA…FVRA), 291–311 (GYIV…RYML), 318–338 (FIYF…FVLI), 353–373 (IARA…AVGF), 375–395 (STAL…WLGL), and 404–424 (LYGT…ILAM). Asp-432 is a Mg(2+) binding site. Transmembrane regions (helical) follow at residues 468–488 (YAIG…IDEV), 506–526 (EVFV…STAI), 574–594 (MVLP…VLKA), and 595–615 (EAAA…ALFL). The Ca(2+) site is built by Asp-623, Asp-649, and Asp-653. Lys-656 lines the substrate pocket. The helical transmembrane segment at 662 to 682 (SLHVLVKLISTITLVLAGLFI) threads the bilayer.

Belongs to the H(+)-translocating pyrophosphatase (TC 3.A.10) family. K(+)-insensitive subfamily. Homodimer. It depends on Mg(2+) as a cofactor.

It is found in the cell membrane. The enzyme catalyses diphosphate + H2O + H(+)(in) = 2 phosphate + 2 H(+)(out). In terms of biological role, proton pump that utilizes the energy of pyrophosphate hydrolysis as the driving force for proton movement across the membrane. Generates a proton motive force. The sequence is that of K(+)-insensitive pyrophosphate-energized proton pump 2 from Moorella thermoacetica (strain ATCC 39073 / JCM 9320).